The following is a 398-amino-acid chain: Organelle RRM domain-containing protein 1, chloroplastic (398 aa).

The N-terminal 88 residues, 1–88 (MDTALPSVLI…RWVVVMDTPP (88 aa)), are a transit peptide targeting the chloroplast. The span at 54 to 70 (LLASSSESPPAQLAAAS) shows a compositional bias: low complexity. The segment at 54 to 79 (LLASSSESPPAQLAAASTESQSRSSR) is disordered. An RRM domain is found at 299–377 (KRLFVTGLSF…WMIVVDVAKT (79 aa)).

It is found in the plastid. Its subcellular location is the chloroplast. Functionally, involved in C-to-U editing of chloroplastic RNA. Functions as major chloroplastic editing factor. Controls a majority of the chloroplastic editing sites. This chain is Organelle RRM domain-containing protein 1, chloroplastic (ORRM1), found in Zea mays (Maize).